Reading from the N-terminus, the 205-residue chain is Cytochrome c oxidase subunit 2 (205 aa).

Cu cation contacts are provided by His-115, Cys-150, Glu-152, Cys-154, His-158, and Met-161. Glu-152 is a Mg(2+) binding site.

It belongs to the cytochrome c oxidase subunit 2 family. Component of the cytochrome c oxidase (complex IV, CIV), a multisubunit enzyme composed of a catalytic core of 3 subunits and several supernumerary subunits. The complex exists as a monomer or a dimer and forms supercomplexes (SCs) in the inner mitochondrial membrane with ubiquinol-cytochrome c oxidoreductase (cytochrome b-c1 complex, complex III, CIII). Requires Cu cation as cofactor.

The protein resides in the mitochondrion inner membrane. The enzyme catalyses 4 Fe(II)-[cytochrome c] + O2 + 8 H(+)(in) = 4 Fe(III)-[cytochrome c] + 2 H2O + 4 H(+)(out). Its function is as follows. Component of the cytochrome c oxidase, the last enzyme in the mitochondrial electron transport chain which drives oxidative phosphorylation. The respiratory chain contains 3 multisubunit complexes succinate dehydrogenase (complex II, CII), ubiquinol-cytochrome c oxidoreductase (cytochrome b-c1 complex, complex III, CIII) and cytochrome c oxidase (complex IV, CIV), that cooperate to transfer electrons derived from NADH and succinate to molecular oxygen, creating an electrochemical gradient over the inner membrane that drives transmembrane transport and the ATP synthase. Cytochrome c oxidase is the component of the respiratory chain that catalyzes the reduction of oxygen to water. Electrons originating from reduced cytochrome c in the intermembrane space (IMS) are transferred via the dinuclear copper A center (CU(A)) of subunit 2 and heme A of subunit 1 to the active site in subunit 1, a binuclear center (BNC) formed by heme A3 and copper B (CU(B)). The BNC reduces molecular oxygen to 2 water molecules using 4 electrons from cytochrome c in the IMS and 4 protons from the mitochondrial matrix. The sequence is that of Cytochrome c oxidase subunit 2 (COII) from Paramecium tetraurelia.